We begin with the raw amino-acid sequence, 443 residues long: Inactive polypeptide N-acetylgalactosaminyltransferase-like protein 5 (443 aa).

The Cytoplasmic segment spans residues 1–4 (MRNA). The helical; Signal-anchor for type II membrane protein transmembrane segment at 5 to 27 (IIRCLFYGSLTFGIWTALLFIYL) threads the bilayer. Residues 28-443 (HHNHVSNWQK…PELEASVNRS (416 aa)) lie on the Lumenal side of the membrane. Residue Asn-87 is glycosylated (N-linked (GlcNAc...) asparagine). 2 cysteine pairs are disulfide-bonded: Cys-124–Cys-355 and Cys-346–Cys-422. Residues 133–243 (LPTASIVICF…RVWLEPLLHA (111 aa)) are catalytic subdomain A. Residues Asp-174 and Arg-204 each coordinate substrate. Asp-227 contributes to the Mn(2+) binding site. Ser-228 lines the substrate pocket. His-229 contacts Mn(2+). A catalytic subdomain B region spans residues 301–363 (PIRSPAMSGG…PCSRVGHISK (63 aa)). Trp-332 contacts substrate. His-360 contributes to the Mn(2+) binding site.

This sequence belongs to the glycosyltransferase 2 family. GalNAc-T subfamily. Mn(2+) serves as cofactor. As to expression, expressed in testis.

The protein resides in the late endosome membrane. In terms of biological role, probable inactive glycosyltransferase required during spermatid development. May participate in protein loading into the acrosomes and accumulation of ubiquitin-proteasome systems around the head-tail coupling apparatus region. The sequence is that of Inactive polypeptide N-acetylgalactosaminyltransferase-like protein 5 (GALNTL5) from Macaca fascicularis (Crab-eating macaque).